A 589-amino-acid chain; its full sequence is Probable translation initiation factor IF-2 (589 aa).

Positions 4–225 (VRSPFVVVMG…AGVSQRFIPR (222 aa)) constitute a tr-type G domain. The segment at 13–20 (GHVDVGKT) is G1. 13–20 (GHVDVGKT) contacts GTP. Positions 38 to 42 (MITQH) are G2. The tract at residues 79–82 (DTPG) is G3. GTP contacts are provided by residues 79–83 (DTPGH) and 133–136 (NKLD). The interval 133–136 (NKLD) is G4. The segment at 201–203 (SAV) is G5.

Belongs to the TRAFAC class translation factor GTPase superfamily. Classic translation factor GTPase family. IF-2 subfamily.

Function in general translation initiation by promoting the binding of the formylmethionine-tRNA to ribosomes. Seems to function along with eIF-2. This chain is Probable translation initiation factor IF-2, found in Pyrobaculum aerophilum (strain ATCC 51768 / DSM 7523 / JCM 9630 / CIP 104966 / NBRC 100827 / IM2).